The sequence spans 223 residues: Deoxyribose-phosphate aldolase (223 aa).

Catalysis depends on D91, which acts as the Proton donor/acceptor. The active-site Schiff-base intermediate with acetaldehyde is the K154. The active-site Proton donor/acceptor is the K183.

This sequence belongs to the DeoC/FbaB aldolase family. DeoC type 1 subfamily.

Its subcellular location is the cytoplasm. It carries out the reaction 2-deoxy-D-ribose 5-phosphate = D-glyceraldehyde 3-phosphate + acetaldehyde. Its pathway is carbohydrate degradation; 2-deoxy-D-ribose 1-phosphate degradation; D-glyceraldehyde 3-phosphate and acetaldehyde from 2-deoxy-alpha-D-ribose 1-phosphate: step 2/2. Its function is as follows. Catalyzes a reversible aldol reaction between acetaldehyde and D-glyceraldehyde 3-phosphate to generate 2-deoxy-D-ribose 5-phosphate. This is Deoxyribose-phosphate aldolase from Lysinibacillus sphaericus (strain C3-41).